A 1244-amino-acid chain; its full sequence is Membrane-associated phosphatidylinositol transfer protein 1 (1244 aa).

Thr59 is subject to Phosphothreonine. Disordered stretches follow at residues 258–331 and 339–358; these read KCNT…QSLS and ARDS…EGFS. Thr287 is subject to Phosphothreonine; by CDK1. Residues 299-319 show a composition bias toward low complexity; it reads ASPDASFGKQWSSSSRSSYSS. Ser300, Ser304, Ser319, Ser326, Ser329, Ser342, Ser345, Ser346, and Ser373 each carry phosphoserine. Position 382 is a phosphoserine; by CDK1 (Ser382). Positions 581 to 682 are disordered; the sequence is AGTGSRGSSR…SSEAPDGPSS (102 aa). Ser593, Ser600, and Ser621 each carry phosphoserine. Residues 643–658 are compositionally biased toward polar residues; the sequence is GSQNSLQAAPATTSSW. Positions 686–880 constitute a DDHD domain; it reads LDFKVSGFFL…VAFILRQVIE (195 aa). Position 896 is a phosphoserine (Ser896). The interval 1206–1244 is disordered; that stretch reads QLLRSRGPSQAEREGPGTPPTTLARGKARSISLKLDSEE. Arg1211 and Arg1218 each carry omega-N-methylarginine. Ser1237 carries the phosphoserine modification.

The protein belongs to the PtdIns transfer protein family. PI transfer class IIA subfamily. Interacts with PIK4CA. Interacts with PTK2B via its C-terminus. Interacts with RHOA. Has higher affinity for the inactive, GDP-bound form of RHOA. The CDK1-phosphorylated form interacts with PLK1. Interacts with VAPB. Phosphorylated on multiple sites by CDK1 at the onset of mitosis. Phosphorylation facilitates dissociation from the Golgi complex and is required for interaction with PLK1. In terms of processing, phosphorylated on threonine residues upon treatment with oleic acid. Post-translationally, phosphorylated on tyrosine residues by PTK2B. In terms of tissue distribution, ubiquitous.

The protein resides in the cytoplasm. The protein localises to the golgi apparatus. Its subcellular location is the golgi stack membrane. It localises to the endoplasmic reticulum membrane. It is found in the lipid droplet. The protein resides in the cleavage furrow. The protein localises to the midbody. The catalysed reaction is a 1,2-diacyl-sn-glycero-3-phospho-(1D-myo-inositol)(in) = a 1,2-diacyl-sn-glycero-3-phospho-(1D-myo-inositol)(out). Its function is as follows. Catalyzes the transfer of phosphatidylinositol (PI) between membranes. Binds PI, phosphatidylcholine (PC) and phosphatidic acid (PA) with the binding affinity order of PI &gt; PA &gt; PC. Regulates RHOA activity, and plays a role in cytoskeleton remodeling. Necessary for normal completion of cytokinesis. Plays a role in maintaining normal diacylglycerol levels in the Golgi apparatus. Necessary for maintaining the normal structure of the endoplasmic reticulum and the Golgi apparatus. Required for protein export from the endoplasmic reticulum and the Golgi. Binds calcium ions. This chain is Membrane-associated phosphatidylinositol transfer protein 1 (PITPNM1), found in Homo sapiens (Human).